A 141-amino-acid polypeptide reads, in one-letter code: Hemoglobin subunit alpha-1 (141 aa).

One can recognise a Globin domain in the interval 1-141; the sequence is VLTDAEKKEV…VATVLTSKYR (141 aa). O2 is bound at residue histidine 58. Histidine 87 contacts heme b.

This sequence belongs to the globin family. Heterotetramer of two alpha chains and two beta chains. Red blood cells.

Involved in oxygen transport from the lung to the various peripheral tissues. This Tachyglossus aculeatus aculeatus (Southeast Australian short-beaked echidna) protein is Hemoglobin subunit alpha-1.